Consider the following 72-residue polypeptide: UPF0270 protein YheU (72 aa).

This sequence belongs to the UPF0270 family.

This Shigella dysenteriae serotype 1 (strain Sd197) protein is UPF0270 protein YheU.